A 71-amino-acid polypeptide reads, in one-letter code: Small ribosomal subunit protein bS21 (71 aa).

This sequence belongs to the bacterial ribosomal protein bS21 family.

The protein is Small ribosomal subunit protein bS21 of Pseudoalteromonas atlantica (strain T6c / ATCC BAA-1087).